Consider the following 304-residue polypeptide: Bifunctional phosphoglucose/phosphomannose isomerase (304 aa).

One can recognise an SIS domain in the interval 16 to 147 (FDKSFKVGKY…KPKIGDVDEA (132 aa)). D-fructose 6-phosphate contacts are provided by Gly-35, Ser-36, Ser-74, Ser-76, Thr-79, and Arg-122. The active-site Proton acceptor is Glu-196. D-fructose 6-phosphate contacts are provided by His-212 and Lys-300. His-212 acts as the Proton donor in catalysis. The active-site Proton acceptor is the Lys-300.

Belongs to the PGI/PMI family. As to quaternary structure, homodimer.

It catalyses the reaction alpha-D-glucose 6-phosphate = beta-D-fructose 6-phosphate. It carries out the reaction D-mannose 6-phosphate = D-fructose 6-phosphate. Its function is as follows. Dual specificity isomerase that catalyzes the isomerization of both glucose-6-phosphate and mannose-6-phosphate to fructose-6-phosphate. In Thermoplasma volcanium (strain ATCC 51530 / DSM 4299 / JCM 9571 / NBRC 15438 / GSS1), this protein is Bifunctional phosphoglucose/phosphomannose isomerase.